Reading from the N-terminus, the 2500-residue chain is MASNHEELPSMVVFSPQSKAPKEGYLDELRSYLCGKAELRPLLDGIENLPNTWSIFAQRNSDIAALTQGIRYTQALSDWAKHGTSSGISNVMSGILSLPLLTIIQVVQYFQFLEVKKLRHSDFMERLRCRGGVQGYCGGLMPAIAIACSATEAEVVTNAVKAMGIALGVGAYGELGDDENVLGPTTIVVRLKQEGQGGDIIKDFPDAHISAITDPKTVSIVGSAPSLAEIQARVKSNGMQTQAMHLRGKVHNPENANLALELCMLCDEHEELSLPNASHLTAPLRSNKTGKKLLDVSLTHEAIETILASCCQWYDLLKGVCKDLEKTGTQSHLFASFGIGDCIPLTPFHQAGLQITKLDVLSFVKALMPPVLPMSGHNHQYAYPTDAVAVVGMACRLPGANSVEELWDLISSGGSTVTPVPEDRMDIAGSFRAMQDPKWAAKQQWWGNFISDIAGFDHSFFRMSPREAASMDPQQRILLETAYQAMESSGYLGSHRRESGDPVGVFLGASFVEYLDNTSSNPPTAYTSTGTIRAFLSGKISYYFGWTGPSEILDTACSSSLVAINRACKAIQNDECPMALAGGVNLITGIHNYLDLAKAGFLSPSGQCKPFDGAADGYCRSEGAGLVVLKRLSQALTDGNQILGVITGASTNQGGLSPSLTVPHSAAQVKLYQNILHQAGMRPEQVSYCETHGTGTQAGDPLEIESVREVFGGPKRQDSMHIGSIKGNIGHCETAAGVAGLLKALVMVNKAAIPPLASHKSLNPKIAALEPDKLAISSCLEDWRVSPRAALVNSYGAAGSNSAVLLCQAPDIDNAPLHRVATTEHTYPIILSAASKPSLLSNAENIASYLRKATSKCTIADVAFTLVKQRKRHPLQWITMESSIDGLVKSLGSLQDPSNAPQPKKVVMTFSGQSRQSIGLNKEWYDSFPLFRRHVNECDDLLQQSGFPSCKSAMFDKEPARDVVPLQCAMFAVQYASALSWIDCGLQVEAVIGHSFGELTALAVSGTLSLKDALNLVATRATLMQSKWGPHKGTMLLISAATEMVRKIIAGNRDVEIACHNAPTSQIVVGTQAAISEVEKVLENNTEYRGIQSQRLNVTHGFHSQFTEPLLENLSESARSLVFHEPKILLECCTLEELNHVGPDHLARHTREPVYFYHAVRRLEQRLGTCLWLEAGFDSPIIPMTKRAVEFPERHTFLDMKTPSGTNPTKMLTTATINLWQNGATSSFWGFHPIETTNIKQVWLPPYQFDRTSHWMPYTDHALEMSKIQAVISNSEPLVELSTKPPRLVEPRTKPSEKGEFSMNTQARRYTEIVSGHAVLSRPLCPAAMYMECAIMAAQLSIGNIVGQAPWFENLTFEAPLGMDPDNDTTVVLKDDGSKSRWSFVARSTSRSNPKRKPVLHAKGDFGFTTQTQVHRYERLVTDRMRHLQHSKSETLKSKRAYGLFSRIVRYAELLKGISSITLGDSEASAIIDVPLGASTEDSSATGLCDCVALDAFIQVVGLLINSGDDCAEDEVFVATGVENFSMSLACDFDRCRTWLVFAMFTPSGNGKAMGDVFILTRDNVLVMTIMGVQFTKLPITRLEKLLDSANPKAHNTPILKSSQQDSIVSASSSSSTEHSDDDSEDDGSRSPSHSDTSVDSESEAPADNGAAKKLKSLIASYVGIAEDAISDDANIADLGVDSLAATELADEISNDFAKEIDGGELPMMTFGELCRIVAPEMAAKPAKAKKKIPYKGKDEATVVESHPGKSQSEIKDLKAVVEPLPRSTPMLSDTTVVRSDPTQVLRQIDTMFQSSADTFGFTDYWTAVAPKQNKLVLAYIGEEFRKLGLDLWAVQPGATLPHIEYLPKHEKVVQRLWDILADHGIVYNYDAAKVRSSKPLPDAPSTALLNELNALFPNFANENRLMSVTAPHFADGLRGKTDHISLLFGSQRGQECLNDFYNNSPQLAVMTDHLLTFFKQLLKEAPLEGSLRILEVGGGFGGTTKRLAEMLEALGQPVEYTFTDVSSMLVKEARKKFSKHSWMDFQSLNLEKDPPASLQRTYDIVIGTNVVHATSNIVNSTTRMRSLLRKGGFIVLSEVTRIVDWYDLVYGLLDGWWAFKDSRTYPLQPADDWVRDLMKAGFETASYSRGDSEESNTQQLIIGSTRPSKVASTSGLSEARLSKSYRIETMPYKIIDDTEILADVFFPEHEVASEAMPIALMIHGGGFMTLSKTAIRPYQTQFLVENGYLPISIDYRLCPEIDLIAGPMTDVRDALTWVRKQLPAIARTRGINVDPTKVVVIGWSTGGHLALTTAWTCEDIGEEPPVAVLSFYGPTNFESEDIDRRRAEQYPERTMSFDRIRKSLSTKPITSYDCPTGTDSTGLGWVRPGDPRSELVLSLFKESHGLQVMLNGLSAADLAKPPPLAKIQAISPMAQLKAGRYNVPTFVIHSDCDEIAPFRDSEAFVEELARRGVKTGLGRVRGKKHIHDLALKPEKDGWVDGAGVGYEFIFDVVGRGVRG.

The interval 13–260 is N-terminal acylcarrier protein transacylase domain (SAT); sequence VFSPQSKAPK…HNPENANLAL (248 aa). In terms of domain architecture, Ketosynthase family 3 (KS3) spans 385–808; it reads TDAVAVVGMA…GSNSAVLLCQ (424 aa). Catalysis depends on for beta-ketoacyl synthase activity residues cysteine 557, histidine 692, and histidine 731. The malonyl-CoA:ACP transacylase (MAT) domain stretch occupies residues 908–1199; it reads MTFSGQSRQS…EFPERHTFLD (292 aa). Residue serine 995 is the For acyl/malonyl transferase activity of the active site. The interval 1286 to 1413 is N-terminal hotdog fold; it reads PRLVEPRTKP…GDFGFTTQTQ (128 aa). The PKS/mFAS DH domain maps to 1286–1584; sequence PRLVEPRTKP…FTKLPITRLE (299 aa). Residues 1287–1583 form a product template (PT) domain region; sequence RLVEPRTKPS…QFTKLPITRL (297 aa). Histidine 1317 functions as the Proton acceptor; for dehydratase activity in the catalytic mechanism. The segment at 1433–1584 is C-terminal hotdog fold; it reads SETLKSKRAY…FTKLPITRLE (152 aa). Residue aspartate 1495 is the Proton donor; for dehydratase activity of the active site. The segment at 1594 to 1649 is disordered; it reads AHNTPILKSSQQDSIVSASSSSSTEHSDDDSEDDGSRSPSHSDTSVDSESEAPADN. The span at 1602 to 1617 shows a compositional bias: low complexity; it reads SSQQDSIVSASSSSST. One can recognise a Carrier domain in the interval 1649–1725; the sequence is NGAAKKLKSL…RIVAPEMAAK (77 aa). O-(pantetheine 4'-phosphoryl)serine is present on serine 1683. Residues 2164–2496 form a thioesterase (TE) domain region; it reads KSYRIETMPY…YEFIFDVVGR (333 aa). Active-site for thioesterase activity residues include serine 2285 and aspartate 2434.

It carries out the reaction 6 malonyl-CoA + 2 acetyl-CoA + 2 S-adenosyl-L-methionine + 3 H(+) = 4-O-demethylbarbatate + 2 S-adenosyl-L-homocysteine + 6 CO2 + 8 CoA + H2O. The protein operates within secondary metabolite biosynthesis; terpenoid biosynthesis. In terms of biological role, non-reducing polyketide synthase; part of the gene cluster that mediates the biosynthesis of atranorin, a depside of polyketide origin that accumulates in the cortical or medullary layers of lichen thalli. The first step in the pathway is performed by the non-reducing polyketide synthase atr1 that produces 4-O-demethylbarbatic acid composed of two 3-methylorsellinic acid (3MOA) moieties from S-adenosyl-L-methionine (SAM), acetyl-CoA and malonyl-CoA units. The pathway continues with the actions of the cytochrome P450 monooygenase atr2 that catalizes the oxidation of c-9 and the O-methyltransferase atr3 that performs the methylation of the carboxyl group to yield atranorin, via the proatranorin II and III intermediates if atr2 acts first, or the proatranorin I intermediate if atr3 acts first. This is Non-reducing polyketide synthase atr1 from Stereocaulon alpinum (Alpine snow lichen).